The primary structure comprises 443 residues: KASVGFKAGVKDYRLTYYTPEYQTKDTDILAAFRVTPQPGVPPEEAGAAVAAESSTGTWTTVWTDGLTSLDRYKGRCYDIEPVAGEESQFIAYVAYPLDLFEEGSVTNLFTSIVGNVFGFKALRALRLEDLRIPPAYSKTFQGPPHGIQVERDKLNKYGRPLLGCTIKPKLGLSAKNYGRAVYECLRGGLDFTKDDENVNSQPFMRWRDRFVFCAEAINKAQAETGEIKGHYLNATAGTCEEMMKRAIFARELGVPIVMHDYLTGGFTANTSLAHYCRDNGLLLHIHRAMHAVIDRQRNHGMHFRVLAKALRMSGGDHVHAGTVVGKLEGERDVTLGFVDLLRDDFIEKDRSRGIYFTQDWVSMPGVLPVASGGIHVWHMPALTEIFGDDSVLQFGGGTLGHPWGNAPGAVTNRVAVEACVQARNEGRDLAREGNEVIREACK.

Lysine 7 carries the post-translational modification N6,N6,N6-trimethyllysine. 2 residues coordinate substrate: asparagine 116 and threonine 166. Residue lysine 168 is the Proton acceptor of the active site. Lysine 170 contacts substrate. Residues lysine 194, aspartate 196, and glutamate 197 each coordinate Mg(2+). At lysine 194 the chain carries N6-carboxylysine. Catalysis depends on histidine 287, which acts as the Proton acceptor. Substrate contacts are provided by arginine 288, histidine 320, and serine 372.

Belongs to the RuBisCO large chain family. Type I subfamily. Heterohexadecamer of 8 large chains and 8 small chains; disulfide-linked. The disulfide link is formed within the large subunit homodimers. Mg(2+) serves as cofactor. Post-translationally, the disulfide bond which can form in the large chain dimeric partners within the hexadecamer appears to be associated with oxidative stress and protein turnover.

The protein resides in the plastid. It is found in the chloroplast. The enzyme catalyses 2 (2R)-3-phosphoglycerate + 2 H(+) = D-ribulose 1,5-bisphosphate + CO2 + H2O. It catalyses the reaction D-ribulose 1,5-bisphosphate + O2 = 2-phosphoglycolate + (2R)-3-phosphoglycerate + 2 H(+). Functionally, ruBisCO catalyzes two reactions: the carboxylation of D-ribulose 1,5-bisphosphate, the primary event in carbon dioxide fixation, as well as the oxidative fragmentation of the pentose substrate in the photorespiration process. Both reactions occur simultaneously and in competition at the same active site. The polypeptide is Ribulose bisphosphate carboxylase large chain (Abies homolepis (Nikko fir)).